Reading from the N-terminus, the 273-residue chain is 3-methyl-2-oxobutanoate hydroxymethyltransferase (273 aa).

Residues aspartate 49 and aspartate 88 each contribute to the Mg(2+) site. 3-methyl-2-oxobutanoate contacts are provided by residues 49-50, aspartate 88, and lysine 118; that span reads DS. Glutamate 120 contacts Mg(2+). The active-site Proton acceptor is glutamate 187.

Belongs to the PanB family. In terms of assembly, homodecamer; pentamer of dimers. It depends on Mg(2+) as a cofactor.

The protein localises to the cytoplasm. It catalyses the reaction 3-methyl-2-oxobutanoate + (6R)-5,10-methylene-5,6,7,8-tetrahydrofolate + H2O = 2-dehydropantoate + (6S)-5,6,7,8-tetrahydrofolate. Its pathway is cofactor biosynthesis; (R)-pantothenate biosynthesis; (R)-pantoate from 3-methyl-2-oxobutanoate: step 1/2. Functionally, catalyzes the reversible reaction in which hydroxymethyl group from 5,10-methylenetetrahydrofolate is transferred onto alpha-ketoisovalerate to form ketopantoate. The sequence is that of 3-methyl-2-oxobutanoate hydroxymethyltransferase from Rhizobium rhizogenes (strain K84 / ATCC BAA-868) (Agrobacterium radiobacter).